The chain runs to 73 residues: MINKKSNASTPLEKAINAVGGSQKVLAEKVGVTPQAINMLKKRGGSLPVTKMRKYEEVTGLPREVLYPGIFAA.

Residues Leu-12 to Leu-66 enclose the HTH cro/C1-type domain. The segment at residues Gln-23–Lys-42 is a DNA-binding region (H-T-H motif).

The chain is Gene 30 protein (30) from Escherichia coli (Bacteriophage phi-80).